The following is a 478-amino-acid chain: Protein nucleotidyltransferase YdiU (478 aa).

Positions 84, 86, 87, 107, 119, 120, 170, and 177 each coordinate ATP. Catalysis depends on Asp246, which acts as the Proton acceptor. Positions 247 and 256 each coordinate Mg(2+). Asp256 is an ATP binding site.

The protein belongs to the SELO family. The cofactor is Mg(2+). Mn(2+) is required as a cofactor.

It catalyses the reaction L-seryl-[protein] + ATP = 3-O-(5'-adenylyl)-L-seryl-[protein] + diphosphate. The catalysed reaction is L-threonyl-[protein] + ATP = 3-O-(5'-adenylyl)-L-threonyl-[protein] + diphosphate. The enzyme catalyses L-tyrosyl-[protein] + ATP = O-(5'-adenylyl)-L-tyrosyl-[protein] + diphosphate. It carries out the reaction L-histidyl-[protein] + UTP = N(tele)-(5'-uridylyl)-L-histidyl-[protein] + diphosphate. It catalyses the reaction L-seryl-[protein] + UTP = O-(5'-uridylyl)-L-seryl-[protein] + diphosphate. The catalysed reaction is L-tyrosyl-[protein] + UTP = O-(5'-uridylyl)-L-tyrosyl-[protein] + diphosphate. Nucleotidyltransferase involved in the post-translational modification of proteins. It can catalyze the addition of adenosine monophosphate (AMP) or uridine monophosphate (UMP) to a protein, resulting in modifications known as AMPylation and UMPylation. The protein is Protein nucleotidyltransferase YdiU of Escherichia coli O139:H28 (strain E24377A / ETEC).